The primary structure comprises 382 residues: Protein shisa-9A (382 aa).

Positions 1–26 (MKWTVLLLEYFLVKVLVLLYSADGEA) are cleaved as a signal peptide. Residues 27–132 (QQLEGFIMLS…DPRHDPTKDK (106 aa)) lie on the Extracellular side of the membrane. Asn-39 is a glycosylation site (N-linked (GlcNAc...) asparagine). A helical transmembrane segment spans residues 133-153 (TNLIVYIICGVVAIMALVGIF). Residues 154–382 (TKLGLEKAHR…VTNSKAEVTV (229 aa)) are Cytoplasmic-facing.

It belongs to the shisa family. SHISA9 subfamily. Component of some AMPA receptors (ionotropic glutamate receptors) complex.

It localises to the cell projection. The protein resides in the dendritic spine membrane. It is found in the synapse. Functionally, regulator of short-term neuronal synaptic plasticity in the dentate gyrus. Associates with AMPA receptors (ionotropic glutamate receptors) in synaptic spines and promotes AMPA receptor desensitization at excitatory synapses. This is Protein shisa-9A (shisa9a) from Danio rerio (Zebrafish).